Reading from the N-terminus, the 377-residue chain is Phosphoserine aminotransferase (377 aa).

Residue R43 participates in L-glutamate binding. Pyridoxal 5'-phosphate contacts are provided by W105, T164, D189, and Q212. K213 carries the N6-(pyridoxal phosphate)lysine modification. 254 to 255 (NT) serves as a coordination point for pyridoxal 5'-phosphate.

This sequence belongs to the class-V pyridoxal-phosphate-dependent aminotransferase family. SerC subfamily. As to quaternary structure, homodimer. Pyridoxal 5'-phosphate serves as cofactor.

It is found in the cytoplasm. The enzyme catalyses O-phospho-L-serine + 2-oxoglutarate = 3-phosphooxypyruvate + L-glutamate. It carries out the reaction 4-(phosphooxy)-L-threonine + 2-oxoglutarate = (R)-3-hydroxy-2-oxo-4-phosphooxybutanoate + L-glutamate. It participates in amino-acid biosynthesis; L-serine biosynthesis; L-serine from 3-phospho-D-glycerate: step 2/3. The protein operates within cofactor biosynthesis; pyridoxine 5'-phosphate biosynthesis; pyridoxine 5'-phosphate from D-erythrose 4-phosphate: step 3/5. Catalyzes the reversible conversion of 3-phosphohydroxypyruvate to phosphoserine and of 3-hydroxy-2-oxo-4-phosphonooxybutanoate to phosphohydroxythreonine. This chain is Phosphoserine aminotransferase, found in Bordetella pertussis (strain Tohama I / ATCC BAA-589 / NCTC 13251).